The chain runs to 784 residues: ATP-dependent 6-phosphofructokinase, platelet type (784 aa).

M1 is subject to N-acetylmethionine. An N-terminal catalytic PFK domain 1 region spans residues 1 to 398 (MSDLDSSSSS…NLNTYKRLAI (398 aa)). Residues S2, S6, and S20 each carry the phosphoserine modification. ATP-binding positions include G33, 96–97 (RC), and 126–129 (GDGS). D127 provides a ligand contact to Mg(2+). Position 141 is a phosphoserine (S141). Substrate contacts are provided by residues 172–174 (SID), R209, 216–218 (MGR), E272, R300, and 306–309 (HVQR). Catalysis depends on D174, which acts as the Proton acceptor. K394 is modified (N6-acetyllysine). Residues 399–410 (KLPDEKIVKSNC) are interdomain linker. The interval 411-784 (NVAVINVGAP…LESLQHHEEL (374 aa)) is C-terminal regulatory PFK domain 2. R480 serves as a coordination point for beta-D-fructose 2,6-bisphosphate. The residue at position 485 (K485) is an N6-acetyllysine. Residues 537-541 (TVSNN), R575, 582-584 (MGG), and E638 each bind beta-D-fructose 2,6-bisphosphate. S539 carries O-linked (GlcNAc) serine glycosylation. The residue at position 650 (Y650) is a Phosphotyrosine. Residues R664 and 670–673 (HMQQ) contribute to the beta-D-fructose 2,6-bisphosphate site. An N6-acetyllysine modification is found at K687. R743 is a beta-D-fructose 2,6-bisphosphate binding site.

It belongs to the phosphofructokinase type A (PFKA) family. ATP-dependent PFK group I subfamily. Eukaryotic two domain clade 'E' sub-subfamily. Homo- and heterotetramers. Phosphofructokinase (PFK) enzyme functions as a tetramer composed of different combinations of 3 types of subunits, called PFKM (M), PFKL (L) and PFKP (P). The composition of the PFK tetramer differs according to the tissue type it is present in. The kinetic and regulatory properties of the tetrameric enzyme are dependent on the subunit composition, hence can vary across tissues. Interacts with ATG4B; promoting phosphorylation of ATG4B. Mg(2+) is required as a cofactor. Post-translationally, glcNAcylation decreases enzyme activity. As to expression, expression is constant during tumor growth and markedly decreases when cell proliferation stops.

The protein resides in the cytoplasm. It carries out the reaction beta-D-fructose 6-phosphate + ATP = beta-D-fructose 1,6-bisphosphate + ADP + H(+). It participates in carbohydrate degradation; glycolysis; D-glyceraldehyde 3-phosphate and glycerone phosphate from D-glucose: step 3/4. Allosterically activated by ADP, AMP, or fructose 2,6-bisphosphate, and allosterically inhibited by ATP or citrate. Its function is as follows. Catalyzes the phosphorylation of D-fructose 6-phosphate to fructose 1,6-bisphosphate by ATP, the first committing step of glycolysis. The sequence is that of ATP-dependent 6-phosphofructokinase, platelet type (Pfkp) from Mus musculus (Mouse).